A 466-amino-acid chain; its full sequence is Asparagine--tRNA ligase (466 aa).

It belongs to the class-II aminoacyl-tRNA synthetase family. Homodimer.

The protein localises to the cytoplasm. The enzyme catalyses tRNA(Asn) + L-asparagine + ATP = L-asparaginyl-tRNA(Asn) + AMP + diphosphate + H(+). The sequence is that of Asparagine--tRNA ligase from Syntrophobacter fumaroxidans (strain DSM 10017 / MPOB).